We begin with the raw amino-acid sequence, 75 residues long: Tautomerase PptA (75 aa).

Proline 2 serves as the catalytic Proton acceptor; via imino nitrogen.

Belongs to the 4-oxalocrotonate tautomerase family. PptA subfamily. As to quaternary structure, homodimer.

The protein localises to the cytoplasm. This is Tautomerase PptA from Klebsiella pneumoniae (strain 342).